Here is a 154-residue protein sequence, read N- to C-terminus: Anaerobic ribonucleoside-triphosphate reductase-activating protein (154 aa).

3 residues coordinate [4Fe-4S] cluster: Cys-26, Cys-30, and Cys-33. S-adenosyl-L-methionine is bound by residues 32 to 34 and Gly-74; that span reads GCY.

This sequence belongs to the organic radical-activating enzymes family. As to quaternary structure, forms a tetramer composed of two NrdD and two NrdG subunits. The cofactor is [4Fe-4S] cluster.

It localises to the cytoplasm. It catalyses the reaction glycyl-[protein] + reduced [flavodoxin] + S-adenosyl-L-methionine = glycin-2-yl radical-[protein] + semiquinone [flavodoxin] + 5'-deoxyadenosine + L-methionine + H(+). Functionally, activation of anaerobic ribonucleoside-triphosphate reductase under anaerobic conditions by generation of an organic free radical, using S-adenosylmethionine and reduced flavodoxin as cosubstrates to produce 5'-deoxy-adenosine. The polypeptide is Anaerobic ribonucleoside-triphosphate reductase-activating protein (nrdG) (Escherichia coli O157:H7).